We begin with the raw amino-acid sequence, 344 residues long: L-rhamnose-proton symporter (344 aa).

10 helical membrane-spanning segments follow: residues A4–A24, W38–L58, F68–I88, M101–I121, T137–L157, L175–A195, L214–I234, V259–G279, I290–L310, and V323–A343.

Belongs to the L-rhamnose transporter (TC 2.A.7.6) family.

It is found in the cell inner membrane. It catalyses the reaction L-rhamnopyranose(in) + H(+)(in) = L-rhamnopyranose(out) + H(+)(out). In terms of biological role, uptake of L-rhamnose across the cytoplasmic membrane with the concomitant transport of protons into the cell (symport system). This chain is L-rhamnose-proton symporter, found in Escherichia coli O17:K52:H18 (strain UMN026 / ExPEC).